The sequence spans 623 residues: Protein EDS1L (623 aa).

At alanine 2 the chain carries N-acetylalanine. The Nucleophile role is filled by serine 123. Active-site charge relay system residues include aspartate 187 and histidine 317.

In terms of assembly, homodimer. Interacts with RPS4, RPS6, SNC1, SRFR1, AvrRps4 and HopA1. Interacts with PAD4 (via N-terminus). Interacts with SAG101. EDS1-SAG101 and EDS1-PAD4 form separate complexes in pathogen-unchallenged cells.

Its subcellular location is the nucleus. The protein localises to the cytoplasm. It localises to the microsome. In terms of biological role, positive regulator of basal resistance and of effector-triggered immunity specifically mediated by TIR-NB-LRR resistance proteins. Disruption by bacterial effector of EDS1-TIR-NB-LRR resistance protein interactions constitutes the first step in resistance activation. Triggers early plant defenses and hypersensitive response independently of PAD4, and then recruits PAD4 to potentiate plant defenses through the accumulation of salicylic acid. Nuclear localization is essential for basal and TIR-NB-LRR-conditioned immunity and for reprogramming defense gene expression, while cytoplasmic EDS1 is required to induce a complete immune response. Heterodimerization with PAD4 or SGA101 is necessary for TNL-mediated effector-triggered immunity. Contributes to nonhost resistance against E.amylovora. Has no direct lipase activity. The sequence is that of Protein EDS1L from Arabidopsis thaliana (Mouse-ear cress).